We begin with the raw amino-acid sequence, 372 residues long: Alanine dehydrogenase 1 (372 aa).

The active site involves His94. Position 170-200 (170-200 (TYVIFGGGVAATNAANVALGLNAKVIIIELN)) interacts with NAD(+).

It belongs to the AlaDH/PNT family.

The enzyme catalyses L-alanine + NAD(+) + H2O = pyruvate + NH4(+) + NADH + H(+). It participates in amino-acid degradation; L-alanine degradation via dehydrogenase pathway; NH(3) and pyruvate from L-alanine: step 1/1. May play a role in cell wall synthesis as L-alanine is an important constituent of the peptidoglycan layer. The polypeptide is Alanine dehydrogenase 1 (ald1) (Staphylococcus aureus (strain MSSA476)).